The sequence spans 116 residues: Large ribosomal subunit protein uL18 (116 aa).

The protein belongs to the universal ribosomal protein uL18 family. In terms of assembly, part of the 50S ribosomal subunit; part of the 5S rRNA/L5/L18/L25 subcomplex. Contacts the 5S and 23S rRNAs.

This is one of the proteins that bind and probably mediate the attachment of the 5S RNA into the large ribosomal subunit, where it forms part of the central protuberance. The polypeptide is Large ribosomal subunit protein uL18 (Shewanella baltica (strain OS223)).